We begin with the raw amino-acid sequence, 280 residues long: Nitrogenase iron-iron protein alpha chain (280 aa).

3 residues coordinate [8Fe-7S] cluster: C5, C31, and C94. C213 lines the [8Fe-9S-C-homocitryl] cluster pocket.

It belongs to the NifD/NifK/NifE/NifN family. As to quaternary structure, hexamer of two alpha, two beta, and two delta chains. [8Fe-7S] cluster serves as cofactor. Requires [8Fe-9S-C-homocitryl] cluster as cofactor.

It catalyses the reaction N2 + 8 reduced [2Fe-2S]-[ferredoxin] + 16 ATP + 16 H2O = H2 + 8 oxidized [2Fe-2S]-[ferredoxin] + 2 NH4(+) + 16 ADP + 16 phosphate + 6 H(+). In terms of biological role, this iron-iron protein is part of the nitrogenase complex that catalyzes the key enzymatic reactions in nitrogen fixation. Other nitrogenase complexes utilize a molybdenum-iron protein or a vanadium-iron protein. This is Nitrogenase iron-iron protein alpha chain (anfD) from Heliomicrobium gestii (Heliobacterium gestii).